Consider the following 360-residue polypeptide: MKTSMQRKLDQLTTRLAELNDLLSREDITSNLDQYRKLTREHAELGPVVEHYALWRQAMNDAATAQELLADASMRDFAEEEIRAARERMDKLGAELQKMLLPKDPNDDRNIFLEIRAGTGGDESALFAGDLLRMYLRYAERNRWQVEMMSASESDLGGYKEVIVRIAGEAAYSKLKFESGGHRVQRVPATETQGRIHTSACTVAVMPEADEIGEVEINPADLRIDTFRASGAGGQHINKTDSAVRVTHLPTGIVVECQDDRSQHKNKDRALKVLAARIKDKQSHEQQAKEAATRKSLIGSGDRSERIRTYNFPQGRLTDHRINLTLYRLDAIMDGDLDELIAALVSEHQAELLASLGDAD.

Q235 is modified (N5-methylglutamine). A compositionally biased stretch (basic and acidic residues) spans 280-293 (DKQSHEQQAKEAAT). The tract at residues 280–300 (DKQSHEQQAKEAATRKSLIGS) is disordered.

It belongs to the prokaryotic/mitochondrial release factor family. Post-translationally, methylated by PrmC. Methylation increases the termination efficiency of RF1.

It localises to the cytoplasm. In terms of biological role, peptide chain release factor 1 directs the termination of translation in response to the peptide chain termination codons UAG and UAA. This chain is Peptide chain release factor 1, found in Paraburkholderia xenovorans (strain LB400).